The primary structure comprises 78 residues: MAFDKQKLDVTNDVTGRFQNGRLSLYHDNEMIGQMTSMNEYELKSGYSFENEKFYKTADVVSGDDAKYVDCDYENGWC.

This is an uncharacterized protein from Bacillus subtilis (strain 168).